Here is a 393-residue protein sequence, read N- to C-terminus: Heparan sulfate glucosamine 3-O-sulfotransferase 3A1 (393 aa).

The Cytoplasmic segment spans residues 1-24 (MAPSGPTGAQPSPAEPLSRSIFRK). Residues 25 to 43 (FLLMLCSLLTSLYVFYCLA) traverse the membrane as a helical; Signal-anchor for type II membrane protein segment. Over 44–393 (ERCPPGSGPV…MTGRDFGWDG (350 aa)) the chain is Lumenal. The disordered stretch occupies residues 85 to 121 (QRRRRGRSGPGDSSDQEEQSPGLAAAPGGSGAGSSVA). 149–153 (KGGTR) provides a ligand contact to 3'-phosphoadenylyl sulfate. Substrate contacts are provided by residues 171–177 (EPHFFDR) and 202–205 (KTPS). 3'-phosphoadenylyl sulfate is bound by residues Arg-230 and Ser-238. N-linked (GlcNAc...) asparagine glycosylation occurs at Asn-260. 270–271 (WS) is a substrate binding site. N-linked (GlcNAc...) asparagine glycosylation occurs at Asn-331. A disulfide bond links Cys-338 and Cys-350. 355-359 (KGRAH) contributes to the 3'-phosphoadenylyl sulfate binding site.

The protein belongs to the sulfotransferase 1 family.

It is found in the golgi apparatus membrane. The catalysed reaction is alpha-D-glucosaminyl-[heparan sulfate](n) + 3'-phosphoadenylyl sulfate = 3-sulfo-alpha-D-glucosaminyl-[heparan sulfate](n) + adenosine 3',5'-bisphosphate + H(+). Its function is as follows. Sulfotransferase that utilizes 3'-phospho-5'-adenylyl sulfate (PAPS) to catalyze the transfer of a sulfo group to an N-unsubstituted glucosamine linked to a 2-O-sulfo iduronic acid unit on heparan sulfate. Catalyzes the O-sulfation of glucosamine in IdoUA2S-GlcNS and also in IdoUA2S-GlcNH2. Unlike HS3ST1/3-OST-1, does not convert non-anticoagulant heparan sulfate to anticoagulant heparan sulfate. This Mus musculus (Mouse) protein is Heparan sulfate glucosamine 3-O-sulfotransferase 3A1 (Hs3st3a1).